Consider the following 1403-residue polypeptide: Perilipin-4 (1403 aa).

Positions 1–21 (MSASGDGTRVPPKSKGKTLSS) are disordered. Residues serine 25 and serine 31 each carry the phosphoserine modification. The tract at residues 33–70 (RNLVSHTHSSTSTKDLQTATDPSGTPAPSSKVSTNSQM) is disordered. 29 repeat units span residues 104-136 (GVFG…AVSG), 137-169 (GVMG…TVTT), 170-202 (GVMG…TVAT), 203-235 (GLAG…TVTT), 236-268 (GLTG…TVTT), 269-301 (GLTG…TVCA), 302-334 (GATG…TVTT), 335-367 (GLTG…TVTT), 368-400 (GLTG…TVCA), 401-433 (GLTG…TVTT), 434-466 (GLTG…TVTT), 467-499 (GLTG…TVTT), 500-532 (GLTG…TVTT), 533-565 (GLTG…TVCA), 566-598 (GLTG…TVTT), 599-631 (GLTG…TVTT), 632-664 (GLTG…TVTT), 665-697 (GLTG…TVCA), 698-730 (GATG…TVTT), 731-763 (GLTG…TVTT), 764-796 (GLTG…NVYA), 797-829 (GVTG…TVTT), 830-862 (GLTG…TVTT), 863-895 (GLTG…TVCA), 896-928 (GLTG…TVTT), 929-961 (GLTG…TVTT), 962-994 (GLTG…SICA), 995-1027 (GATG…TAKG), and 1028-1060 (TVQT…MAKG). The segment at 104–1060 (GVFGIMDAAK…VTSAMNMAKG (957 aa)) is 29 X 33 AA approximate tandem repeat. Serine 1281 carries the phosphoserine modification. Threonine 1287 carries the phosphothreonine modification.

It belongs to the perilipin family. Specifically expressed in white adipose tissue and also weakly detected in heart and skeletal muscle (at protein level).

It is found in the cell membrane. Its subcellular location is the cytoplasm. The protein localises to the lipid droplet. In terms of biological role, may play a role in triacylglycerol packaging into adipocytes. May function as a coat protein involved in the biogenesis of lipid droplets. This Mus musculus (Mouse) protein is Perilipin-4 (Plin4).